The primary structure comprises 548 residues: MTRPLETPPDIEVPVLIVGGSMVGLSTALFLSHYGIQAMAVERHERTAIHPRAGHFHLRTLELLRSVGLEEVVARTSAEAFFPNGGINAVQSLAGGETASFISNLNAGVEEFSPTRRLFIAQQALEPILRSRAEELGADLRYSTEVVSVVDDGEGVTTVIRDKASGQERTVRSRYLVASDGWRSQRRAQLGIETRGQGLLSRSATIYFRADCRELLAGTHLGVIYVLNERLRGFFRFEKSLQSGFLGVATLGDPTRPGALDVSAGFTTDTAVELVRAAIGVPDIDVEIQDVAHWEATAALADRYRGGRIFLAGDAAHVVPPYGGFGGNTGVQDAHNLASKLALVLDGTAGEALLDTYEAERRPVGALTVDQAFSRYIRRLAPEFLDEQTPELVDDFSMELGYRYHSPAVLTEDDDKAVDQAVVGHPREALGRPGSRAPHVALRVDDHDRSVLDLLGRDFVVLAGPAGQVWAEAAERASKELGLPLSAYVVGSDTPVADVEGRFADAYGLSDAGVALVRPDGFIAWRSRDLAEDPEAALTDALRAVLCR.

This sequence belongs to the PheA/TfdB FAD monooxygenase family. Monomer. FAD serves as cofactor.

The catalysed reaction is 4-methyl-5-nitrocatechol + NADPH + O2 = 2-hydroxy-5-methylquinone + nitrite + NADP(+) + H2O + H(+). The enzyme catalyses 4-methyl-5-nitrocatechol + NADH + O2 = 2-hydroxy-5-methylquinone + nitrite + NAD(+) + H2O + H(+). Activated by magnesium or manganese ions. Inhibited by concentrations of 4-methyl-5-nitrocatechol (MNC) above 2 mM. Involved in the degradation of 2,4-dinitrotoluene (2,4-DNT). Catalyzes the removal of the nitro group from 4-methyl-5-nitrocatechol (MNC) to yield 2-hydroxy-5-methylquinone. It can use both NADH and NADPH as electron donors, but prefers NADPH. Also able to use 4-nitrocatechol as substrate. The polypeptide is 4-methyl-5-nitrocatechol 5-monooxygenase (Burkholderia sp).